We begin with the raw amino-acid sequence, 735 residues long: Alpha-adducin (735 aa).

N-acetylmethionine is present on M1. Residues 1–11 show a composition bias toward low complexity; the sequence is MNGDTRAAVVT. Positions 1–21 are disordered; the sequence is MNGDTRAAVVTSPPPTTAPHK. S12, S59, and S64 each carry phosphoserine. A Phosphothreonine modification is found at T331. 3 positions are modified to phosphoserine: S334, S353, and S355. Phosphothreonine is present on T358. 4 positions are modified to phosphoserine: S364, S366, S408, and S427. Disordered stretches follow at residues 418–487 and 576–735; these read GHSF…AVPN and RREV…KSDS. The residue at position 429 (T429) is a Phosphothreonine. Phosphoserine occurs at positions 431 and 436. Basic and acidic residues predominate over residues 440 to 455; that stretch reads QQREKTRWLHSGRGDD. The residue at position 445 (T445) is a Phosphothreonine; by ROCK2. Phosphoserine occurs at positions 464 and 465. Phosphothreonine; by ROCK2 is present on T480. Residue S481 is modified to Phosphoserine; by PKA. The span at 576–601 shows a compositional bias: basic and acidic residues; it reads RREVERKQKGSEENLDETREQKEKSP. Phosphoserine occurs at positions 586, 600, and 605. Residue T610 is modified to Phosphothreonine. Position 613 is a phosphoserine (S613). Phosphothreonine is present on T614. The segment covering 698–712 has biased composition (low complexity); that stretch reads GSPMDPGSDGSPGKS. S705, S708, and S712 each carry phosphoserine. Positions 713 to 735 are enriched in basic residues; the sequence is PSKKKKKFRTPSFLKKSKKKSDS. S714 carries the phosphoserine; by PKC modification. An interaction with calmodulin region spans residues 715–732; that stretch reads KKKKKFRTPSFLKKSKKK. S724 is modified (phosphoserine; by PKA and PKC).

The protein belongs to the aldolase class II family. Adducin subfamily. Heterodimer of an alpha and a beta subunit or an alpha and a gamma subunit.

Its subcellular location is the cytoplasm. The protein localises to the cytoskeleton. It localises to the cell membrane. In terms of biological role, membrane-cytoskeleton-associated protein that promotes the assembly of the spectrin-actin network. Binds to calmodulin. In Mus musculus (Mouse), this protein is Alpha-adducin (Add1).